Consider the following 520-residue polypeptide: MDFANLAAQLNAGTILPEGIVIVTLMGVLIVDLILGRTSSRWIGYLAIAGLLAAIVALYFQWDATNPISFTGAFIGDDLSIIFRGIIALSAVVTILMSIRYVEQSGTALAEFIAILLTATLGGMFVSGASELVMIFISLETLSISSYLLTGYTKRDPRSNEAALKYLLIGASSTAVFLYGVSLLYGLSGGQTELNAIANGIITANVGQSLGAVIALVFVIAGIGFKISAAPFHQWTPDVYEGAPTPVIAFLSVGSKAAGFALAIRLLTTVFPFVAEEWKFVFTALAVLSMILGNVVALAQTSMKRMLAYSSIAQAGFVMIGLIAGTDAGYASMIFYLLVYLFMNLCGFTCIILFSLRTGTDQIAEYSGLYQKDPLLTLGLSISLLSLGGIPPLAGFFGKIYLFWAGWQAGLYWLVLLGLVTSVISIYYYIRVVKMMVVKEPQEMSDVVKNYPEIRWNLPGFRPLQVGLVLTLIATSVAGILSNPLFTLANNSVANTAILQATKVVSTQVSAIPAEKPDGL.

14 helical membrane passes run 15 to 35 (ILPEGIVIVTLMGVLIVDLIL), 42 to 62 (WIGYLAIAGLLAAIVALYFQW), 79 to 99 (LSIIFRGIIALSAVVTILMSI), 106 to 126 (GTALAEFIAILLTATLGGMFV), 132 to 152 (LVMIFISLETLSISSYLLTGY), 167 to 187 (LLIGASSTAVFLYGVSLLYGL), 210 to 230 (LGAVIALVFVIAGIGFKISAA), 244 to 264 (PTPVIAFLSVGSKAAGFALAI), 280 to 300 (FVFTALAVLSMILGNVVALAQ), 306 to 326 (MLAYSSIAQAGFVMIGLIAGT), 334 to 354 (IFYLLVYLFMNLCGFTCIILF), 378 to 398 (LGLSISLLSLGGIPPLAGFFG), 400 to 420 (IYLFWAGWQAGLYWLVLLGLV), and 466 to 486 (VGLVLTLIATSVAGILSNPLF).

Belongs to the complex I subunit 2 family. As to quaternary structure, NDH-1 can be composed of about 15 different subunits; different subcomplexes with different compositions have been identified which probably have different functions.

The protein resides in the cellular thylakoid membrane. The catalysed reaction is a plastoquinone + NADH + (n+1) H(+)(in) = a plastoquinol + NAD(+) + n H(+)(out). The enzyme catalyses a plastoquinone + NADPH + (n+1) H(+)(in) = a plastoquinol + NADP(+) + n H(+)(out). Functionally, NDH-1 shuttles electrons from an unknown electron donor, via FMN and iron-sulfur (Fe-S) centers, to quinones in the respiratory and/or the photosynthetic chain. The immediate electron acceptor for the enzyme in this species is believed to be plastoquinone. Couples the redox reaction to proton translocation, and thus conserves the redox energy in a proton gradient. Cyanobacterial NDH-1 also plays a role in inorganic carbon-concentration. This is NAD(P)H-quinone oxidoreductase subunit 2 from Nostoc sp. (strain PCC 7120 / SAG 25.82 / UTEX 2576).